The chain runs to 418 residues: AP-3 complex subunit mu-1 (418 aa).

The MHD domain occupies 176-417 (NNEAYFDVIE…ITKAGKFQVR (242 aa)).

Belongs to the adaptor complexes medium subunit family. In terms of assembly, the AP-3 complex associates with the BLOC-1 complex.

Its subcellular location is the golgi apparatus. The protein localises to the cytoplasmic vesicle membrane. Part of the AP-3 complex, an adaptor-related complex which is not clathrin-associated. The complex is associated with the Golgi region as well as more peripheral structures. It facilitates the budding of vesicles from the Golgi membrane and may be directly involved in trafficking to lysosomes. In concert with the BLOC-1 complex, AP-3 is required to target cargos into vesicles assembled at cell bodies for delivery into neurites and nerve terminals. The protein is AP-3 complex subunit mu-1 (AP3M1) of Gallus gallus (Chicken).